Consider the following 382-residue polypeptide: Lipid-A-disaccharide synthase (382 aa).

The protein belongs to the LpxB family.

The enzyme catalyses 2-N,3-O-bis[(3R)-3-hydroxytetradecanoyl]-alpha-D-glucosaminyl 1-phosphate + UDP-2-N,3-O-bis[(3R)-3-hydroxytetradecanoyl]-alpha-D-glucosamine = lipid A disaccharide (E. coli) + UDP + H(+). It carries out the reaction a lipid X + a UDP-2-N,3-O-bis[(3R)-3-hydroxyacyl]-alpha-D-glucosamine = a lipid A disaccharide + UDP + H(+). The protein operates within glycolipid biosynthesis; lipid IV(A) biosynthesis; lipid IV(A) from (3R)-3-hydroxytetradecanoyl-[acyl-carrier-protein] and UDP-N-acetyl-alpha-D-glucosamine: step 5/6. Condensation of UDP-2,3-diacylglucosamine and 2,3-diacylglucosamine-1-phosphate to form lipid A disaccharide, a precursor of lipid A, a phosphorylated glycolipid that anchors the lipopolysaccharide to the outer membrane of the cell. In Escherichia coli O45:K1 (strain S88 / ExPEC), this protein is Lipid-A-disaccharide synthase.